We begin with the raw amino-acid sequence, 141 residues long: Nucleoside diphosphate kinase (141 aa).

Residues K11, F59, R87, T93, R104, and N114 each coordinate ATP. H117 (pros-phosphohistidine intermediate) is an active-site residue.

Belongs to the NDK family. As to quaternary structure, homotetramer. Mg(2+) is required as a cofactor.

It is found in the cytoplasm. The enzyme catalyses a 2'-deoxyribonucleoside 5'-diphosphate + ATP = a 2'-deoxyribonucleoside 5'-triphosphate + ADP. It carries out the reaction a ribonucleoside 5'-diphosphate + ATP = a ribonucleoside 5'-triphosphate + ADP. Its function is as follows. Major role in the synthesis of nucleoside triphosphates other than ATP. The ATP gamma phosphate is transferred to the NDP beta phosphate via a ping-pong mechanism, using a phosphorylated active-site intermediate. This is Nucleoside diphosphate kinase from Pseudomonas putida (strain GB-1).